Reading from the N-terminus, the 204-residue chain is Golgi to ER traffic protein 1 (204 aa).

Over 1–11 (MLTLDIDPYTI) the chain is Lumenal. The helical transmembrane segment at 12–31 (LVTSFLILAIQKLVTVIGKQ) threads the bilayer. At 32-116 (KIQLYIWQIY…RIDSITKLAI (85 aa)) the chain is on the cytoplasmic side. Residues 78–113 (AKWTKINRALDKLKLEVQELNETIAGEKTRIDSITK) adopt a coiled-coil conformation. The helical transmembrane segment at 117–137 (TLILTLPIWFLRIFCRKTALL) threads the bilayer. The Lumenal segment spans residues 138–161 (YIRKGILPAYLEWWLALPFFKSGT). Residues 162 to 178 (IGLTCWMFVVNSVLSNL) traverse the membrane as a helical segment. Residues 179–204 (IFLISFPFTQKVERPIKPKNEQKTES) lie on the Cytoplasmic side of the membrane.

Belongs to the WRB/GET1 family. Component of the Golgi to ER traffic (GET) complex, which is composed of GET1, GET2 and GET3. Within the complex, GET1 and GET2 form a heterotetramer which is stabilized by phosphatidylinositol binding and which binds to the GET3 homodimer.

The protein resides in the endoplasmic reticulum membrane. Its subcellular location is the golgi apparatus membrane. Functionally, required for the post-translational delivery of tail-anchored (TA) proteins to the endoplasmic reticulum. Together with GET2, acts as a membrane receptor for soluble GET3, which recognizes and selectively binds the transmembrane domain of TA proteins in the cytosol. The GET complex cooperates with the HDEL receptor ERD2 to mediate the ATP-dependent retrieval of resident ER proteins that contain a C-terminal H-D-E-L retention signal from the Golgi to the ER. The chain is Golgi to ER traffic protein 1 from Lodderomyces elongisporus (strain ATCC 11503 / CBS 2605 / JCM 1781 / NBRC 1676 / NRRL YB-4239) (Yeast).